The sequence spans 547 residues: MKKTFILGIEGTAWNLSAAIVTETEIIAEVTETYKPEKGGIHPREAAQHHAKYAAGVIKKLLAEAKQNGIEPSDLDGIAFSQGPGLGPCLRTVATAARMLGLSLGIPLIGVNHCIAHIEIGIWKTPAKDPVVLYVSGANSQVISYMEGRYRVFGETLDIGLGNALDKFARGAGLPHPGGPKIEAYAKEAKRYIPLPYVIKGMDLSFSGLSTAASEALRKASLEDVCYSYQETAFAMVVEVAERALAHTGKKEVLLAGGVGANTRLREMLNEMCEARGAKFYVPEKRFMGDNGTMIAYTGLLMYKSGNTISLEDSRVNPSFRTDDVKVTWIKEEEMKKVPEISPETFFRMPPGEILDNGAEAVVYLQEGPEGKRALVKERVPKAYRHKEIDERIRRERNRTEARLMSEARRAGVPTPIIYDVEEFKLKMQFIEGVPIKYLITPPLSEKVGELVGKLHSSGIVHGDLTTSNLLLAGERLYLIDFGLAYFDKSLEARGVDVHVLFQTFESTHRNYEALVKAFEKGYASTFIDSEDVLRRVEEIKKRARYA.

Residues 1–329 (MKKTFILGIE…FRTDDVKVTW (329 aa)) are kae1. The Fe cation site is built by histidine 113, histidine 117, and tyrosine 134. Residues 134 to 138 (YVSGA), aspartate 166, glycine 179, glutamate 183, and asparagine 262 each bind L-threonylcarbamoyladenylate. Aspartate 290 contacts Fe cation. Positions 340–547 (EISPETFFRM…EEIKKRARYA (208 aa)) constitute a Protein kinase domain. ATP-binding positions include 355–363 (LDNGAEAVV) and lysine 377. The active-site Proton acceptor; for kinase activity is aspartate 464.

This sequence in the N-terminal section; belongs to the KAE1 / TsaD family. In the C-terminal section; belongs to the protein kinase superfamily. Tyr protein kinase family. BUD32 subfamily. In terms of assembly, component of the KEOPS complex that consists of Kae1, Bud32, Cgi121 and Pcc1; the whole complex dimerizes. Requires Fe(2+) as cofactor.

The protein localises to the cytoplasm. The enzyme catalyses L-seryl-[protein] + ATP = O-phospho-L-seryl-[protein] + ADP + H(+). It catalyses the reaction L-threonyl-[protein] + ATP = O-phospho-L-threonyl-[protein] + ADP + H(+). It carries out the reaction L-threonylcarbamoyladenylate + adenosine(37) in tRNA = N(6)-L-threonylcarbamoyladenosine(37) in tRNA + AMP + H(+). Required for the formation of a threonylcarbamoyl group on adenosine at position 37 (t(6)A37) in tRNAs that read codons beginning with adenine. Is a component of the KEOPS complex that is probably involved in the transfer of the threonylcarbamoyl moiety of threonylcarbamoyl-AMP (TC-AMP) to the N6 group of A37. The Kae1 domain likely plays a direct catalytic role in this reaction. The Bud32 domain probably displays kinase activity that regulates Kae1 function. The polypeptide is Probable bifunctional tRNA threonylcarbamoyladenosine biosynthesis protein (Methanosarcina mazei (strain ATCC BAA-159 / DSM 3647 / Goe1 / Go1 / JCM 11833 / OCM 88) (Methanosarcina frisia)).